A 199-amino-acid polypeptide reads, in one-letter code: Thymidylate kinase (199 aa).

7–14 (GTEGVGKT) is a binding site for ATP.

The protein belongs to the thymidylate kinase family.

It carries out the reaction dTMP + ATP = dTDP + ADP. Its function is as follows. Phosphorylation of dTMP to form dTDP in both de novo and salvage pathways of dTTP synthesis. The protein is Thymidylate kinase of Acinetobacter baumannii (strain ACICU).